The primary structure comprises 257 residues: Phycoerythrobilin:ferredoxin oxidoreductase (257 aa).

The protein belongs to the HY2 family.

The enzyme catalyses (3Z)-phycoerythrobilin + oxidized 2[4Fe-4S]-[ferredoxin] = 15,16-dihydrobiliverdin + reduced 2[4Fe-4S]-[ferredoxin] + 2 H(+). Catalyzes the two-electron reduction of the C2 and C3(1) diene system of 15,16-dihydrobiliverdin. This chain is Phycoerythrobilin:ferredoxin oxidoreductase, found in Prochlorococcus marinus (strain MIT 9303).